The following is a 513-amino-acid chain: Probable cytosol aminopeptidase (513 aa).

Mn(2+) contacts are provided by Lys-275 and Asp-280. The active site involves Lys-287. 3 residues coordinate Mn(2+): Asp-298, Asp-357, and Glu-359. The active site involves Arg-361.

This sequence belongs to the peptidase M17 family. It depends on Mn(2+) as a cofactor.

The protein resides in the cytoplasm. The enzyme catalyses Release of an N-terminal amino acid, Xaa-|-Yaa-, in which Xaa is preferably Leu, but may be other amino acids including Pro although not Arg or Lys, and Yaa may be Pro. Amino acid amides and methyl esters are also readily hydrolyzed, but rates on arylamides are exceedingly low.. It carries out the reaction Release of an N-terminal amino acid, preferentially leucine, but not glutamic or aspartic acids.. Presumably involved in the processing and regular turnover of intracellular proteins. Catalyzes the removal of unsubstituted N-terminal amino acids from various peptides. In Streptomyces avermitilis (strain ATCC 31267 / DSM 46492 / JCM 5070 / NBRC 14893 / NCIMB 12804 / NRRL 8165 / MA-4680), this protein is Probable cytosol aminopeptidase.